The primary structure comprises 33 residues: Cysteine-rich venom protein tripurin (33 aa).

Belongs to the CRISP family. Contains 8 disulfide bonds. As to expression, expressed by the venom gland.

The protein resides in the secreted. Functionally, blocks contraction of smooth muscle elicited by high potassium-induced depolarization, but does not block caffeine-stimulated contraction. May target voltage-gated calcium channels on smooth muscle. In Trimeresurus purpureomaculatus (Mangrove pit viper), this protein is Cysteine-rich venom protein tripurin.